The following is a 134-amino-acid chain: ASAGVAVTNLNLKPGHCVEIKGSIPPDCKGFAVNLGEDASNFLLHFNARFDLHGDVNKIVCNSKEADAWGSEQREEVFPFQQGAEVMVCFEYQTQKIIIKFSSGDQFSFPVRKVLPSIPFLSLEGLAFKSITTE.

At A1 the chain carries N-acetylalanine. Residues G4–E134 form the Galectin domain. A beta-D-galactoside contacts are provided by residues H45–R49, H53, N62, and W69–E72.

Homodimer.

Its subcellular location is the secreted. The protein localises to the extracellular space. The protein resides in the extracellular matrix. In terms of biological role, may regulate cell apoptosis and cell differentiation. Binds beta-galactoside and a wide array of complex carbohydrates. This chain is Galectin-1, found in Rhinella arenarum (Argentine common toad).